A 324-amino-acid polypeptide reads, in one-letter code: Anthranilate phosphoribosyltransferase (324 aa).

Residues Gly-75, 78–79, Thr-83, 85–88, 102–110, and Ser-114 contribute to the 5-phospho-alpha-D-ribose 1-diphosphate site; these read GD, NVST, and KHGNFGITG. Position 75 (Gly-75) interacts with anthranilate. Ser-87 is a Mg(2+) binding site. Asn-105 contacts anthranilate. Arg-160 contacts anthranilate. Residues Asp-216 and Glu-217 each contribute to the Mg(2+) site.

The protein belongs to the anthranilate phosphoribosyltransferase family. As to quaternary structure, homodimer. Mg(2+) serves as cofactor.

It catalyses the reaction N-(5-phospho-beta-D-ribosyl)anthranilate + diphosphate = 5-phospho-alpha-D-ribose 1-diphosphate + anthranilate. It participates in amino-acid biosynthesis; L-tryptophan biosynthesis; L-tryptophan from chorismate: step 2/5. Its function is as follows. Catalyzes the transfer of the phosphoribosyl group of 5-phosphorylribose-1-pyrophosphate (PRPP) to anthranilate to yield N-(5'-phosphoribosyl)-anthranilate (PRA). The chain is Anthranilate phosphoribosyltransferase from Picrophilus torridus (strain ATCC 700027 / DSM 9790 / JCM 10055 / NBRC 100828 / KAW 2/3).